A 238-amino-acid chain; its full sequence is Ribitol-5-phosphate cytidylyltransferase (238 aa).

CTP contacts are provided by residues 7 to 10 (FAGG) and 80 to 86 (GETGQES).

This sequence belongs to the IspD/TarI cytidylyltransferase family. TarI subfamily.

The enzyme catalyses D-ribitol 5-phosphate + CTP + H(+) = CDP-L-ribitol + diphosphate. Catalyzes the transfer of the cytidylyl group of CTP to D-ribitol 5-phosphate. This is Ribitol-5-phosphate cytidylyltransferase from Vibrio parahaemolyticus serotype O3:K6 (strain RIMD 2210633).